The sequence spans 773 residues: Linolenate 9R-lipoxygenase (773 aa).

A Lipoxygenase domain is found at 176–773; it reads YEWVDSKKKS…LEDLMMSINI (598 aa). Fe cation is bound by residues H515, H520, and I773.

Belongs to the lipoxygenase family.

It carries out the reaction (9Z,12Z,15Z)-octadecatrienoate + O2 = (9R,10E,12Z,15Z)-9-hydroperoxyoctadeca-10,12,15-trienoate. It participates in lipid metabolism; oxylipin biosynthesis. Catalyzes the conversion of alpha-linoleate to (9R,10E,12Z,15Z)-9-hydroperoxyoctadeca-10,12,15-trienoate in oxylipin biosynthesis. Also converts alpha-linoleate to (9R,10E,12Z)-9-hydroperoxyoctadeca-10,12-dienoate. The sequence is that of Linolenate 9R-lipoxygenase from Nostoc sp. (strain PCC 7120 / SAG 25.82 / UTEX 2576).